We begin with the raw amino-acid sequence, 393 residues long: MSDHVKITPMTLNFGPQHPAAHGVMRLVLEMGGEVIERIDPHIGLLHRGTEKLIEYKTYLQALPYFDRLDYVSPMAQEHAYSLCVEKLLKCEVPIRAKYLRVIFCELTRILNHLLNISSQALDIGAMTPLLWMFEEREKILNFYERASGARFHSAYIRPGGVAADIPEDLIHDIFQFVNTFPKFMDDVDSLLTENRIWKQRNVDIGVVSKKQALNWGFSGPMLRACGIPWDLRKSQPYEIYDELEFKIPIGEKGDCYDRYLVRMAEIRESIRLVEQCLNRIPDGPVKTDDRKIAPPKRSEMKKSMEALIHHFKLYSEGYSVPAGETYMAVEAPKGEFGVYIVSDGTNKPYRCRIRAPGFAHLQAIDMMAKGHMLADLTAIIGSLDIVFGEIDR.

This sequence belongs to the complex I 49 kDa subunit family. NDH-1 is composed of 14 different subunits. Subunits NuoB, C, D, E, F, and G constitute the peripheral sector of the complex.

It localises to the cell inner membrane. It carries out the reaction a quinone + NADH + 5 H(+)(in) = a quinol + NAD(+) + 4 H(+)(out). Its function is as follows. NDH-1 shuttles electrons from NADH, via FMN and iron-sulfur (Fe-S) centers, to quinones in the respiratory chain. The immediate electron acceptor for the enzyme in this species is believed to be ubiquinone. Couples the redox reaction to proton translocation (for every two electrons transferred, four hydrogen ions are translocated across the cytoplasmic membrane), and thus conserves the redox energy in a proton gradient. The sequence is that of NADH-quinone oxidoreductase subunit D from Ehrlichia ruminantium (strain Welgevonden).